The sequence spans 57 residues: Conotoxin reg3.17 (57 aa).

A signal peptide spans 1-16 (TICLLLFPLTVVPLDG). A propeptide spanning residues 17–44 (DQPAHQPAVRKHNIKSAVQLRQWDEEQQ) is cleaved from the precursor. Cystine bridges form between cysteine 45-cysteine 57, cysteine 46-cysteine 53, and cysteine 50-cysteine 56.

The protein belongs to the conotoxin M superfamily. In terms of tissue distribution, expressed by the venom duct.

The protein localises to the secreted. This chain is Conotoxin reg3.17, found in Conus regius (Crown cone).